The chain runs to 217 residues: NADH dehydrogenase (ubiquinone) 23 kDa subunit (217 aa).

The transit peptide at 1 to 26 directs the protein to the mitochondrion; it reads MSLTMRIFTASRNGQRLFGSHGARLL. 2 4Fe-4S ferredoxin-type domains span residues 109-138 and 148-177; these read RRYP…IEAE and TRYD…EGPN. 8 residues coordinate [4Fe-4S] cluster: Cys118, Cys121, Cys124, Cys128, Cys157, Cys160, Cys163, and Cys167.

The protein belongs to the complex I 23 kDa subunit family. Part of the mitochondrial membrane respiratory chain NADH dehydrogenase (Complex I). This is a component of the iron-sulfur (IP) fragment of the enzyme. The cofactor is [4Fe-4S] cluster. As to expression, expressed in muscles (at protein level).

The protein resides in the mitochondrion. It carries out the reaction a ubiquinone + NADH + 5 H(+)(in) = a ubiquinol + NAD(+) + 4 H(+)(out). In terms of biological role, core subunit of the mitochondrial membrane respiratory chain NADH dehydrogenase (Complex I) that is believed to belong to the minimal assembly required for catalysis. Complex I functions in the transfer of electrons from NADH to the respiratory chain. The immediate electron acceptor for the enzyme is believed to be ubiquinone. This Drosophila melanogaster (Fruit fly) protein is NADH dehydrogenase (ubiquinone) 23 kDa subunit.